A 717-amino-acid polypeptide reads, in one-letter code: Cleavage stimulation factor subunit 3 (717 aa).

An N-acetylserine modification is found at S2. 9 HAT repeats span residues 45–77 (QPID…AEIK), 79–110 (KNYD…YVRE), 117–152 (SYKE…FLKG), 163–196 (QRIT…YEEG), 221–261 (KEYE…WEKS), 271–303 (LITK…YLEQ), 319–352 (LFSD…YEES), 354–387 (MKYE…FARR), and 458–494 (NEDN…FESN). The interval 684-705 (VKRPNEDSDEDEEKGAVVPPVH) is disordered. S691 carries the post-translational modification Phosphoserine.

As to quaternary structure, homodimer. The CSTF complex is composed of CSTF1 (50 kDa subunit), CSTF2 (64 kDa subunit) and CSTF3 (77 kDa subunit). CSTF3 directly interacts with CSTF1 and CSTF2. Interacts with FIP1L1.

The protein resides in the nucleus. Functionally, one of the multiple factors required for polyadenylation and 3'-end cleavage of mammalian pre-mRNAs. The polypeptide is Cleavage stimulation factor subunit 3 (CSTF3) (Homo sapiens (Human)).